We begin with the raw amino-acid sequence, 266 residues long: MPAPYKDRFAGKKVLVTGASQGIGEATALRFAEEGAQVALNGRKEDKLIAVREKLPKVSGGEHPIATGDISKEDDVKRLVAESIKAMGGLDVLVCNAGYQIPSPSEDIKLEDFEGVMAVNVTGVMLPCREVIRYWLENGIKGTIIVNSSVHQIIPKPHYLGYSASKGAVGNIVRTLALEYATRGIRVNAVAPGAIVTPINMSWIDDPEQYKAVSSHIPMKRPGESREIADAITFLAAEDSTYITGQTLYVDGGLTLYGDFENNWSS.

Residue 15–39 (LVTGASQGIGEATALRFAEEGAQVA) coordinates NADP(+). Ser-149 contributes to the substrate binding site. Tyr-162 (proton acceptor) is an active-site residue.

Belongs to the short-chain dehydrogenases/reductases (SDR) family. In terms of assembly, homotetramer or homooctamer.

It carries out the reaction D-glucose + NADP(+) = D-glucono-1,5-lactone + NADPH + H(+). Functionally, oxidizes both D-glucose and D-mannose, but is 15 times more catalytically efficient with mannose. Strictly dependent on NADP. In Gluconobacter oxydans (strain 621H) (Gluconobacter suboxydans), this protein is Glucose 1-dehydrogenase.